The primary structure comprises 891 residues: MLPKNYDPNEIEPKWQKYWLEEKIYKYKLEPDKPSYAIDTPPPFTSGTLHLGHVLSHTWIDIIARYKRMRGYNVLFPQGFDNHGLPTELKVEKEFGISKDQPEEFLKKCIEWTWQAIEKMRAQFIRIGYSADWDLEYHTMDDWYKAAVQKSLLDFYKKGLIYREEHPVYWCPRCRTSLAKAEVGYVEEEGYLYYIKLPLADGSGYIPIATTRPELMPACVAVFVHPDDERYKHLVGKKVKLPIYEREVPILADEDVDPNFGTGAVYNCTYGDEQDIVWQKRYNLPVIIAINEDGTMNENAGPYAGLKIEEARKKIAEDLEKMGLLYKKEKITHRVLRHTERSSCMAPIELLPKKQWFIKVREFTDDIVEVAKKINWYPEDMFLRLKDWAESMDWDWVISRQRVFGTPIPFWICKNGHIIPAREEDLPVDPRFDKPPVEKCPVCGAEIEPVTDVLDCWVDSSITPLIITKWHEAIKGDEEAKKWFEHNFPTALRPQGTDIIRTWAFYTIFRTYMLTGEKPWNDIVINGMVAGPDGRKMSKSYGNVVSPEEVIPKYGADALRLWTALAPPGEDHPFKWEIVDYNFRFLQKLWNIYRFAERHIKDFDYEKYKHIELEPLDRWILSRLHRIIKFATEELEKYRFNLITRELMTFIWHEVADDYIEMIKHRLYGEDEESKLKAKVALYELLYNIMLLLAPFVPHITEELYHHIFKEKIGEKSVHLLQWPEYREDRIDEEAEKIGELAREIVSAMRKYKNSHGMPLNAKLKHVAIYATDSYEMLKVIEKDIAGTMNIERLEIVKGEPQLEEKVVEIKPIYKRIGPRYGKLVPKIVKHLQENAEEIGRRIKEEGKVEFEVEGQKVVLEKEDIEIKKAVFSEGEEVETAVVRDATILFF.

Residues 43–53 carry the 'HIGH' region motif; the sequence is PFTSGTLHLGH. Positions 536 to 540 match the 'KMSKS' region motif; that stretch reads KMSKS. Residue Lys-539 coordinates ATP.

This sequence belongs to the class-I aminoacyl-tRNA synthetase family. ValS type 2 subfamily.

It localises to the cytoplasm. The enzyme catalyses tRNA(Val) + L-valine + ATP = L-valyl-tRNA(Val) + AMP + diphosphate. Catalyzes the attachment of valine to tRNA(Val). As ValRS can inadvertently accommodate and process structurally similar amino acids such as threonine, to avoid such errors, it has a 'posttransfer' editing activity that hydrolyzes mischarged Thr-tRNA(Val) in a tRNA-dependent manner. This chain is Valine--tRNA ligase, found in Pyrococcus furiosus (strain ATCC 43587 / DSM 3638 / JCM 8422 / Vc1).